The following is a 962-amino-acid chain: CRACD-like protein (962 aa).

3 disordered regions span residues 38 to 102, 131 to 174, and 212 to 871; these read GKKK…PESG, NVKM…HDVG, and PAES…QEPV. Residues 46-61 show a composition bias toward polar residues; that stretch reads PSSTGSSTWKQSQTRN. S92 carries the phosphoserine modification. The segment covering 224–244 has biased composition (basic residues); that stretch reads AKHKLQVKPRNQRSSKMRRLS. The span at 245–256 shows a compositional bias: polar residues; the sequence is SRAQSESLSDLT. A compositionally biased stretch (basic and acidic residues) spans 266 to 278; that stretch reads EKPLLEVSPEERP. Pro residues-rich tracts occupy residues 292–303 and 354–365; these read EPGPPAPLPPPG and PPSPPEGPPNPG. The span at 407 to 425 shows a compositional bias: low complexity; the sequence is PEGDTTPPETDPAATSEAP. 2 stretches are compositionally biased toward basic and acidic residues: residues 429–440 and 459–480; these read DGPERSVPKEAE and EPER…ERIG. S490 carries the post-translational modification Phosphoserine. Low complexity predominate over residues 503 to 521; the sequence is AAASEGPAASPPLAAAESP. Basic and acidic residues-rich tracts occupy residues 536–546, 555–570, 631–642, and 709–728; these read APERPKAERAE, AAPE…ELRG, KLAERGPQDSGD, and YSAE…EEKC. The span at 753 to 764 shows a compositional bias: pro residues; sequence PEPLSSKPPLPR. Basic and acidic residues-rich tracts occupy residues 784–806 and 844–869; these read PGER…RGAE and QEDK…RGQE.

In Homo sapiens (Human), this protein is CRACD-like protein.